The sequence spans 697 residues: Elongation factor G 1 (697 aa).

Positions 8–283 (ERYRNFGIMA…AVVDFLPSPV (276 aa)) constitute a tr-type G domain. GTP contacts are provided by residues 17 to 24 (AHIDAGKT), 81 to 85 (DTPGH), and 135 to 138 (NKMD).

It belongs to the TRAFAC class translation factor GTPase superfamily. Classic translation factor GTPase family. EF-G/EF-2 subfamily.

The protein resides in the cytoplasm. In terms of biological role, catalyzes the GTP-dependent ribosomal translocation step during translation elongation. During this step, the ribosome changes from the pre-translocational (PRE) to the post-translocational (POST) state as the newly formed A-site-bound peptidyl-tRNA and P-site-bound deacylated tRNA move to the P and E sites, respectively. Catalyzes the coordinated movement of the two tRNA molecules, the mRNA and conformational changes in the ribosome. The sequence is that of Elongation factor G 1 from Anaeromyxobacter dehalogenans (strain 2CP-C).